The sequence spans 225 residues: ATP phosphoribosyltransferase (225 aa).

Belongs to the ATP phosphoribosyltransferase family. Short subfamily. In terms of assembly, heteromultimer composed of HisG and HisZ subunits.

The protein localises to the cytoplasm. The catalysed reaction is 1-(5-phospho-beta-D-ribosyl)-ATP + diphosphate = 5-phospho-alpha-D-ribose 1-diphosphate + ATP. It participates in amino-acid biosynthesis; L-histidine biosynthesis; L-histidine from 5-phospho-alpha-D-ribose 1-diphosphate: step 1/9. Its function is as follows. Catalyzes the condensation of ATP and 5-phosphoribose 1-diphosphate to form N'-(5'-phosphoribosyl)-ATP (PR-ATP). Has a crucial role in the pathway because the rate of histidine biosynthesis seems to be controlled primarily by regulation of HisG enzymatic activity. The sequence is that of ATP phosphoribosyltransferase from Herminiimonas arsenicoxydans.